The primary structure comprises 168 residues: NADH-quinone oxidoreductase subunit I (168 aa).

2 consecutive 4Fe-4S ferredoxin-type domains span residues 58 to 88 (LRRY…IEAG) and 99 to 128 (VRYD…EGPN). [4Fe-4S] cluster-binding residues include Cys68, Cys71, Cys74, Cys78, Cys108, Cys111, Cys114, and Cys118.

Belongs to the complex I 23 kDa subunit family. In terms of assembly, NDH-1 is composed of 14 different subunits. Subunits NuoA, H, J, K, L, M, N constitute the membrane sector of the complex. [4Fe-4S] cluster is required as a cofactor.

The protein resides in the cell inner membrane. The enzyme catalyses a quinone + NADH + 5 H(+)(in) = a quinol + NAD(+) + 4 H(+)(out). In terms of biological role, NDH-1 shuttles electrons from NADH, via FMN and iron-sulfur (Fe-S) centers, to quinones in the respiratory chain. The immediate electron acceptor for the enzyme in this species is believed to be ubiquinone. Couples the redox reaction to proton translocation (for every two electrons transferred, four hydrogen ions are translocated across the cytoplasmic membrane), and thus conserves the redox energy in a proton gradient. In Bradyrhizobium diazoefficiens (strain JCM 10833 / BCRC 13528 / IAM 13628 / NBRC 14792 / USDA 110), this protein is NADH-quinone oxidoreductase subunit I.